An 833-amino-acid chain; its full sequence is Probable serine/threonine-protein kinase DDB_G0277165 (833 aa).

In terms of domain architecture, Protein kinase spans 9-262; the sequence is FIIGKTLGQG…IKEIKEHPWF (254 aa). ATP-binding positions include 15 to 23 and K38; that span reads LGQGTTGKV. The active-site Proton acceptor is the D133. The UBA domain maps to 288-329; it reads QIDEDIFRSLMALGVGTIDEVKQQLVSNQKSATLIYYRLLEE. A compositionally biased stretch (basic and acidic residues) spans 338–351; the sequence is NKYGYKPKETRRNS. 3 disordered regions span residues 338 to 472, 528 to 626, and 764 to 799; these read NKYG…ISPS, QALQ…PIEI, and FINP…GGQN. 2 stretches are compositionally biased toward low complexity: residues 365–432 and 441–459; these read NNNN…NNNN and SSSQ…QIPS. Positions 460–472 are enriched in polar residues; that stretch reads NSTSQESMQISPS. The span at 528–589 shows a compositional bias: low complexity; the sequence is QALQQHHQQQ…SSTSTSPQLS (62 aa). Over residues 600–625 the composition is skewed to polar residues; that stretch reads GSMTASTNPATSPTMSHRGKTSSPIE.

Belongs to the protein kinase superfamily. CAMK Ser/Thr protein kinase family.

The enzyme catalyses L-seryl-[protein] + ATP = O-phospho-L-seryl-[protein] + ADP + H(+). It carries out the reaction L-threonyl-[protein] + ATP = O-phospho-L-threonyl-[protein] + ADP + H(+). This Dictyostelium discoideum (Social amoeba) protein is Probable serine/threonine-protein kinase DDB_G0277165.